The primary structure comprises 310 residues: Haloalkane dehalogenase (310 aa).

In terms of domain architecture, AB hydrolase-1 spans 30–140 (PVVLFLHGNP…PMPTWQDFHH (111 aa)). The active-site Nucleophile is the D103. E127 serves as the catalytic Proton donor. The active-site Proton acceptor is the H280.

Belongs to the haloalkane dehalogenase family. Type 2 subfamily. As to quaternary structure, monomer.

The catalysed reaction is 1-haloalkane + H2O = a halide anion + a primary alcohol + H(+). Functionally, catalyzes hydrolytic cleavage of carbon-halogen bonds in halogenated aliphatic compounds, leading to the formation of the corresponding primary alcohols, halide ions and protons. This is Haloalkane dehalogenase from Bradyrhizobium diazoefficiens (strain JCM 10833 / BCRC 13528 / IAM 13628 / NBRC 14792 / USDA 110).